A 339-amino-acid chain; its full sequence is Glutamyl-tRNA reductase (339 aa).

Substrate is bound by residues 50-53 (TCHR), Ser102, 107-109 (ETE), and Gln113. Cys51 acts as the Nucleophile in catalysis. 181 to 186 (GYSDIN) is a binding site for NADP(+).

This sequence belongs to the glutamyl-tRNA reductase family. In terms of assembly, homodimer.

The catalysed reaction is (S)-4-amino-5-oxopentanoate + tRNA(Glu) + NADP(+) = L-glutamyl-tRNA(Glu) + NADPH + H(+). It participates in porphyrin-containing compound metabolism; protoporphyrin-IX biosynthesis; 5-aminolevulinate from L-glutamyl-tRNA(Glu): step 1/2. Its function is as follows. Catalyzes the NADPH-dependent reduction of glutamyl-tRNA(Glu) to glutamate 1-semialdehyde (GSA). This Chlamydia pneumoniae (Chlamydophila pneumoniae) protein is Glutamyl-tRNA reductase.